Reading from the N-terminus, the 297-residue chain is PDZ domain-containing protein GIPC3 (297 aa).

Positions 97-177 (EVEVTKTEDA…SQPFTLRLVQ (81 aa)) constitute a PDZ domain.

The protein belongs to the GIPC family. As to expression, expressed in adult lung, brain and testis. In the inner ear, it is expressed in the inner and outer hair cells of the organ of Corti. Also expressed in cochlear spiral ganglion neurons.

Its function is as follows. Required for postnatal maturation of the hair bundle and long-term survival of hair cells and spiral ganglion. The sequence is that of PDZ domain-containing protein GIPC3 (Gipc3) from Mus musculus (Mouse).